A 477-amino-acid chain; its full sequence is UDP-N-acetylmuramoylalanine--D-glutamate ligase (477 aa).

Position 127-133 (127-133) interacts with ATP; that stretch reads GTNGKTT.

This sequence belongs to the MurCDEF family.

It localises to the cytoplasm. It catalyses the reaction UDP-N-acetyl-alpha-D-muramoyl-L-alanine + D-glutamate + ATP = UDP-N-acetyl-alpha-D-muramoyl-L-alanyl-D-glutamate + ADP + phosphate + H(+). Its pathway is cell wall biogenesis; peptidoglycan biosynthesis. Functionally, cell wall formation. Catalyzes the addition of glutamate to the nucleotide precursor UDP-N-acetylmuramoyl-L-alanine (UMA). The polypeptide is UDP-N-acetylmuramoylalanine--D-glutamate ligase (Prochlorococcus marinus (strain MIT 9515)).